The chain runs to 1137 residues: DNA-directed RNA polymerase III subunit RPC2 (1137 aa).

The C4-type zinc finger occupies 1084–1099; the sequence is DVCRTCGRMAYCSWCH. The Zn(2+) site is built by cysteine 1086, cysteine 1089, cysteine 1098, and cysteine 1101.

This sequence belongs to the RNA polymerase beta chain family. Component of the RNA polymerase III (Pol III) complex consisting of 17 subunits.

It is found in the nucleus. It catalyses the reaction RNA(n) + a ribonucleoside 5'-triphosphate = RNA(n+1) + diphosphate. Its function is as follows. DNA-dependent RNA polymerase catalyzes the transcription of DNA into RNA using the four ribonucleoside triphosphates as substrates. Second largest core component of RNA polymerase III which synthesizes small RNAs, such as 5S rRNA and tRNAs. Proposed to contribute to the polymerase catalytic activity and forms the polymerase active center together with the largest subunit. Pol III is composed of mobile elements and Polr3B is part of the core element with the central large cleft and probably a clamp element that moves to open and close the cleft. This Drosophila melanogaster (Fruit fly) protein is DNA-directed RNA polymerase III subunit RPC2.